A 328-amino-acid polypeptide reads, in one-letter code: Probable ABC transporter permease YtrC (328 aa).

8 helical membrane-spanning segments follow: residues 16 to 36 (VVIL…IVNT), 60 to 80 (ISNL…CFLG), 110 to 130 (GFVI…LILV), 144 to 164 (IGVI…GALT), 167 to 187 (AFAQ…IIAL), 236 to 256 (YLLL…FISF), 277 to 297 (VQIL…YYTG), and 300 to 320 (IIGY…VSYF).

It belongs to the ABC-5 integral membrane protein family. As to quaternary structure, the complex is composed of 2 ATP-binding proteins (YtrB and YtrE), 2 transmembrane proteins (YtrC and YtrD) and a solute-binding protein (YtrF).

It localises to the cell membrane. Functionally, part of the ABC transporter complex YtrBCDEF that plays a role in acetoin utilization during stationary phase and sporulation. The sequence is that of Probable ABC transporter permease YtrC (ytrC) from Bacillus subtilis (strain 168).